Here is a 311-residue protein sequence, read N- to C-terminus: Ribonuclease HIII (311 aa).

One can recognise an RNase H type-2 domain in the interval 95-311; sequence MSIVGSDEVG…NTEKAFRLLK (217 aa). A divalent metal cation is bound by residues aspartate 101, glutamate 102, and aspartate 206.

This sequence belongs to the RNase HII family. RnhC subfamily. The cofactor is Mn(2+). It depends on Mg(2+) as a cofactor.

It localises to the cytoplasm. It carries out the reaction Endonucleolytic cleavage to 5'-phosphomonoester.. Endonuclease that specifically degrades the RNA of RNA-DNA hybrids. The protein is Ribonuclease HIII of Bacillus anthracis (strain A0248).